A 278-amino-acid chain; its full sequence is Ras-related protein Rab-40A-like (278 aa).

GTP-binding residues include Gly-26, Lys-27, and Ser-28. Ser-28 lines the Mg(2+) pocket. The interval 41–49 (SPYSHLGGI) is switch-I. A Mg(2+)-binding site is contributed by Asp-69. The GTP site is built by Gly-72, Asn-126, and Arg-127. The tract at residues 72-88 (GQGRFCTIFRSYSRGAQ) is switch-II. The region spanning 175–228 (LLRHRLNWLGRPSKVLSLQDLCCRTIVSCTPVHLVDKLPLPIALRSHLKSFSMA) is the SOCS box domain. The S-palmitoyl cysteine moiety is linked to residue Cys-270. A lipid anchor (S-geranylgeranyl cysteine) is attached at Cys-275.

It belongs to the small GTPase superfamily. Rab family. Mg(2+) serves as cofactor. Expressed in brain, lung, heart, skeletal muscle, kidney and liver. Highest expression in brain. Expressed in fetal brain and kidney.

Its subcellular location is the membrane. It localises to the cytoplasm. It is found in the mitochondrion. The enzyme catalyses GTP + H2O = GDP + phosphate + H(+). The protein operates within protein modification; protein ubiquitination. Its activity is regulated as follows. Regulated by guanine nucleotide exchange factors (GEFs) which promote the exchange of bound GDP for free GTP. Regulated by GTPase activating proteins (GAPs) which increase the GTP hydrolysis activity. Inhibited by GDP dissociation inhibitors (GDIs). May act as substrate-recognition component of the ECS(RAB40) E3 ubiquitin ligase complex which mediates the ubiquitination and subsequent proteasomal degradation of target proteins. The Rab40 subfamily belongs to the Rab family that are key regulators of intracellular membrane trafficking, from the formation of transport vesicles to their fusion with membranes. Rabs cycle between an inactive GDP-bound form and an active GTP-bound form that is able to recruit to membranes different sets of downstream effectors directly responsible for vesicle formation, movement, tethering and fusion. The polypeptide is Ras-related protein Rab-40A-like (Homo sapiens (Human)).